A 219-amino-acid polypeptide reads, in one-letter code: Small ribosomal subunit protein uS3 (219 aa).

The KH type-2 domain maps to 38-106; that stretch reads IRTYLKKKLY…KLNLEIKEIK (69 aa).

It belongs to the universal ribosomal protein uS3 family. In terms of assembly, part of the 30S ribosomal subunit. Forms a tight complex with proteins S10 and S14.

In terms of biological role, binds the lower part of the 30S subunit head. Binds mRNA in the 70S ribosome, positioning it for translation. The protein is Small ribosomal subunit protein uS3 of Lachnoclostridium phytofermentans (strain ATCC 700394 / DSM 18823 / ISDg) (Clostridium phytofermentans).